A 208-amino-acid polypeptide reads, in one-letter code: ATP phosphoribosyltransferase (208 aa).

It belongs to the ATP phosphoribosyltransferase family. Short subfamily. Heteromultimer composed of HisG and HisZ subunits.

It is found in the cytoplasm. The enzyme catalyses 1-(5-phospho-beta-D-ribosyl)-ATP + diphosphate = 5-phospho-alpha-D-ribose 1-diphosphate + ATP. The protein operates within amino-acid biosynthesis; L-histidine biosynthesis; L-histidine from 5-phospho-alpha-D-ribose 1-diphosphate: step 1/9. Catalyzes the condensation of ATP and 5-phosphoribose 1-diphosphate to form N'-(5'-phosphoribosyl)-ATP (PR-ATP). Has a crucial role in the pathway because the rate of histidine biosynthesis seems to be controlled primarily by regulation of HisG enzymatic activity. The polypeptide is ATP phosphoribosyltransferase (Oceanobacillus iheyensis (strain DSM 14371 / CIP 107618 / JCM 11309 / KCTC 3954 / HTE831)).